Here is a 144-residue protein sequence, read N- to C-terminus: NADH-ubiquinone oxidoreductase chain 6 (144 aa).

The next 5 helical transmembrane spans lie at 1-21 (MVKV…INID), 25-45 (SSFF…MSMH), 46-66 (IWFS…ILVY), 79-99 (YMAV…VLTY), and 108-128 (FYYS…LFFM).

This sequence belongs to the complex I subunit 6 family.

The protein resides in the mitochondrion membrane. It carries out the reaction a ubiquinone + NADH + 5 H(+)(in) = a ubiquinol + NAD(+) + 4 H(+)(out). In terms of biological role, core subunit of the mitochondrial membrane respiratory chain NADH dehydrogenase (Complex I) that is believed to belong to the minimal assembly required for catalysis. Complex I functions in the transfer of electrons from NADH to the respiratory chain. The immediate electron acceptor for the enzyme is believed to be ubiquinone. This chain is NADH-ubiquinone oxidoreductase chain 6, found in Caenorhabditis elegans.